A 184-amino-acid polypeptide reads, in one-letter code: Large ribosomal subunit protein uL22 (184 aa).

Positions 160 to 184 (PEEEVAQKKKISQKKLKKQKLMARE) are disordered. Basic residues predominate over residues 167-184 (KKKISQKKLKKQKLMARE).

This sequence belongs to the universal ribosomal protein uL22 family. In terms of assembly, component of the large ribosomal subunit.

The protein resides in the cytoplasm. Its function is as follows. Component of the large ribosomal subunit. The ribosome is a large ribonucleoprotein complex responsible for the synthesis of proteins in the cell. The polypeptide is Large ribosomal subunit protein uL22 (RPL17) (Bos taurus (Bovine)).